A 640-amino-acid polypeptide reads, in one-letter code: Protein cereblon (640 aa).

Positions 1–11 are enriched in acidic residues; that stretch reads MDDEETAEIDE. Disordered regions lie at residues 1–25 and 92–159; these read MDDE…ELGP and REDP…EAVP. Residues 113-137 show a composition bias toward low complexity; it reads QPAQQEEQASLPYDSPSRASISSRH. The Lon N-terminal domain occupies 278–506; the sequence is RMLIFMHQHI…IIDTTLKQES (229 aa). One can recognise a CULT domain in the interval 505–614; it reads ESLFYCRYCN…LAGSSVRIGK (110 aa). Cys-510, Cys-513, Cys-579, and Cys-582 together coordinate Zn(2+).

Belongs to the CRBN family. Likely a component of a DCX (DDB1-CUL4-X-box) protein ligase complex. May interact with pic/DDB1. In terms of processing, ubiquitinated.

The protein localises to the nucleus. It participates in protein modification; protein ubiquitination. Substrate recognition component of a DCX (DDB1-CUL4-X-box) E3 protein ligase complex that mediates the ubiquitination and subsequent proteasomal degradation of target proteins. Has an essential role in mediating growth by negatively regulating insulin signaling. It also has a role in maintaining presynaptic function in the neuromuscular junction synapses of third-instar larvae. This Drosophila virilis (Fruit fly) protein is Protein cereblon.